A 385-amino-acid chain; its full sequence is Elsinochromes biosynthesis cluster protein HP2 (385 aa).

The N-terminal stretch at 1 to 22 (MVLLYILIMVALIPMYMTVVQD) is a signal peptide. The next 2 helical transmembrane spans lie at 94 to 114 (TVLS…SMFD) and 148 to 168 (FYGQ…IVLW). The N-linked (GlcNAc...) asparagine glycan is linked to Asn187. The helical transmembrane segment at 209–229 (SWTFGQIVPIVLLVSPLVAAF) threads the bilayer. Asn248 carries N-linked (GlcNAc...) asparagine glycosylation. 2 helical membrane passes run 309–329 (AILF…LPLA) and 344–364 (YYAF…AVPF).

It localises to the membrane. In terms of biological role, part of the gene cluster that mediates the biosynthesis of elsinochromes, pigments consisting of at least four interconvertible tautomers (A, B, C and D) that have a core phenolic quinone to which various side chains are attached and which play an important role in fungal pathogenesis. The non-reducing polyketide synthase PKS1 was proposed to iteratively catalyze decarboxylation between acetyl-CoA and malonyl-CoA subunits for polyketide chain elongation. The released polyketide undergoes cyclization to form an aromatic ring, and proceeds via serial modification steps to produce the heptaketide back- bone of elsinochrome. As elsinochrome has a symmetrical structure, two identical heptaketides are fused to form a core 1,2-dihydrobenzo-perylene ring structure, which can then be successively modified to produce the various derivatives of elsinochrome. Some of these reactions may be cooperatively carried out, at least in part, by the products of RDT1, OXR1 and PKS1. PRF1, embedded within the elsinochrome cluster possibly functions to stabilize some of the biosynthetic enzymes required for elsinochrome production. As prefoldin is a hexamer containing 2 a and 4 b subunits, additional prefoldin subunits, whose coding genes may not immediately link to the elsinochrome biosynthetic gene cluster, are required to fulfill the chaperone function. In addition, no methyltransferase-coding gene exists within the biosynthetic gene cluster, even though elsinochrome has four methyl groups at positions C3, C7, C8 and C12. Apparently, the identified gene cluster does not contain the entire entourage of genes responsible for elsinochrome biosynthesis. Once elsinochrome is synthesized, it must be exported outside the fungal cells, which is probably accomplished by the ECT1 transporter, to avoid toxicity. This is Elsinochromes biosynthesis cluster protein HP2 from Elsinoe fawcettii (Citrus scab fungus).